The following is a 475-amino-acid chain: Ubiquitin carboxyl-terminal hydrolase calypso (475 aa).

One can recognise a UCH catalytic domain in the interval 44-275 (GWLELESDPG…IRFNLMAVVP (232 aa)). Cys130 (nucleophile) is an active-site residue. His212 (proton donor) is an active-site residue. The stretch at 333 to 360 (AKDLQLLLKNLDTEIAINEQNLADENDR) forms a coiled coil. The ULD domain occupies 374-402 (NYDKFICTFLSMLAHQGVLGELVSQHLLP). A positively charged C-terminal tail required for binding nucleosomes region spans residues 404-475 (KKVSGQSAAN…KGRNKCRKRK (72 aa)). The interval 411–475 (AANRISKQNS…KGRNKCRKRK (65 aa)) is disordered. Residues 419-460 (NSAASSAGANAGAAAGVTPKSQQQQQQPQTAASKNGKSPGKT) show a composition bias toward low complexity. Positions 461-475 (PGRRRKGRNKCRKRK) are enriched in basic residues.

The protein belongs to the peptidase C12 family. BAP1 subfamily. Catalytic component of the polycomb repressive deubiquitinase (PR-DUB) complex, at least composed of caly/calypso, Asx and sba (MBD5/6 homolog). The PR-DUB complex associates with nucleosomes to mediate deubiquitination of histone H2AK118ub1 substrates; the association requires the positively charged C-terminal tail of caly, probably due to direct binding of DNA. Interacts (via ULD domain) with Asx (via DEUBAD domain); the interaction produces a stable heterodimer with a composite binding site for ubiquitin. Homodimerizes (via coiled-coil hinge-region between the UCH and ULD domains) to mediate assembly of 2 copies of the caly-Asx heterodimer into a bisymmetric tetramer; dimerization enhances PR-DUB association with nucleosomes.

It is found in the nucleus. It catalyses the reaction Thiol-dependent hydrolysis of ester, thioester, amide, peptide and isopeptide bonds formed by the C-terminal Gly of ubiquitin (a 76-residue protein attached to proteins as an intracellular targeting signal).. Catalytic component of the polycomb repressive deubiquitinase (PR-DUB) complex, a complex that specifically mediates deubiquitination of histone H2A monoubiquitinated at 'Lys-119' (H2AK118ub1). Mediates bisymmetric organization of the PR-DUB complex and is involved in association with nucleosomes to mediate deubiquitination. Does not deubiquitinate monoubiquitinated histone H2B. Required to maintain the transcriptionally repressive state of homeotic genes throughout development. The PR-DUB complex has weak or no activity toward 'Lys-48'- and 'Lys-63'-linked polyubiquitin chains. Polycomb group (PcG) protein. The polypeptide is Ubiquitin carboxyl-terminal hydrolase calypso (Drosophila persimilis (Fruit fly)).